Reading from the N-terminus, the 200-residue chain is Putative pseudouridine methyltransferase (200 aa).

2 residues coordinate S-adenosyl-L-methionine: Met-133 and Cys-187.

This sequence belongs to the methyltransferase superfamily. TrmY family.

It is found in the cytoplasm. This chain is Putative pseudouridine methyltransferase, found in Alcanivorax borkumensis (strain ATCC 700651 / DSM 11573 / NCIMB 13689 / SK2).